Here is a 626-residue protein sequence, read N- to C-terminus: Chaperone protein DnaK (626 aa).

Thr-175 is subject to Phosphothreonine; by autocatalysis. Disordered regions lie at residues 469–488 (DKGT…GLPK), 498–517 (AEAH…TRNQ), and 583–626 (AQQG…KDNK). Over residues 498 to 516 (AEAHEAEDKKRKEDAETRN) the composition is skewed to basic and acidic residues. A compositionally biased stretch (acidic residues) spans 609-626 (SDDDVVDAEVVDDDKDNK).

This sequence belongs to the heat shock protein 70 family.

In terms of biological role, acts as a chaperone. The polypeptide is Chaperone protein DnaK (Bifidobacterium adolescentis (strain ATCC 15703 / DSM 20083 / NCTC 11814 / E194a)).